The chain runs to 221 residues: Stromal cell-derived factor 2-like protein 1 (221 aa).

The signal sequence occupies residues 1–28; the sequence is MWSAGSGRAAGPALLGILLALSLSGGRA. MIR domains are found at residues 33-87, 95-150, and 151-205; these read AGLV…IRGG, GSPV…VRCS, and GQHW…AMEG. A Prevents secretion from ER motif is present at residues 218 to 221; sequence HDEL.

It is found in the endoplasmic reticulum lumen. This chain is Stromal cell-derived factor 2-like protein 1 (SDF2L1), found in Bos taurus (Bovine).